Reading from the N-terminus, the 231-residue chain is Large ribosomal subunit protein uL1 (231 aa).

Belongs to the universal ribosomal protein uL1 family. Part of the 50S ribosomal subunit.

Its function is as follows. Binds directly to 23S rRNA. The L1 stalk is quite mobile in the ribosome, and is involved in E site tRNA release. Protein L1 is also a translational repressor protein, it controls the translation of the L11 operon by binding to its mRNA. This chain is Large ribosomal subunit protein uL1, found in Mesomycoplasma hyopneumoniae (strain 232) (Mycoplasma hyopneumoniae).